A 117-amino-acid polypeptide reads, in one-letter code: UPF0102 protein RHOS4_03930 (117 aa).

This sequence belongs to the UPF0102 family.

In Cereibacter sphaeroides (strain ATCC 17023 / DSM 158 / JCM 6121 / CCUG 31486 / LMG 2827 / NBRC 12203 / NCIMB 8253 / ATH 2.4.1.) (Rhodobacter sphaeroides), this protein is UPF0102 protein RHOS4_03930.